Consider the following 526-residue polypeptide: 2-succinyl-5-enolpyruvyl-6-hydroxy-3-cyclohexene-1-carboxylate synthase (526 aa).

The protein belongs to the TPP enzyme family. MenD subfamily. Homodimer. The cofactor is Mg(2+). Mn(2+) is required as a cofactor. It depends on thiamine diphosphate as a cofactor.

The catalysed reaction is isochorismate + 2-oxoglutarate + H(+) = 5-enolpyruvoyl-6-hydroxy-2-succinyl-cyclohex-3-ene-1-carboxylate + CO2. It functions in the pathway quinol/quinone metabolism; 1,4-dihydroxy-2-naphthoate biosynthesis; 1,4-dihydroxy-2-naphthoate from chorismate: step 2/7. Its pathway is quinol/quinone metabolism; menaquinone biosynthesis. Functionally, catalyzes the thiamine diphosphate-dependent decarboxylation of 2-oxoglutarate and the subsequent addition of the resulting succinic semialdehyde-thiamine pyrophosphate anion to isochorismate to yield 2-succinyl-5-enolpyruvyl-6-hydroxy-3-cyclohexene-1-carboxylate (SEPHCHC). This Bdellovibrio bacteriovorus (strain ATCC 15356 / DSM 50701 / NCIMB 9529 / HD100) protein is 2-succinyl-5-enolpyruvyl-6-hydroxy-3-cyclohexene-1-carboxylate synthase.